A 430-amino-acid chain; its full sequence is Enolase (430 aa).

Gln165 is a (2R)-2-phosphoglycerate binding site. The Proton donor role is filled by Glu207. Mg(2+) contacts are provided by Asp244, Glu287, and Asp314. (2R)-2-phosphoglycerate contacts are provided by Lys339, Arg368, Ser369, and Lys390. Lys339 (proton acceptor) is an active-site residue.

It belongs to the enolase family. As to quaternary structure, component of the RNA degradosome, a multiprotein complex involved in RNA processing and mRNA degradation. Mg(2+) serves as cofactor.

It is found in the cytoplasm. Its subcellular location is the secreted. It localises to the cell surface. It catalyses the reaction (2R)-2-phosphoglycerate = phosphoenolpyruvate + H2O. Its pathway is carbohydrate degradation; glycolysis; pyruvate from D-glyceraldehyde 3-phosphate: step 4/5. Its function is as follows. Catalyzes the reversible conversion of 2-phosphoglycerate (2-PG) into phosphoenolpyruvate (PEP). It is essential for the degradation of carbohydrates via glycolysis. The polypeptide is Enolase (Xanthomonas axonopodis pv. citri (strain 306)).